Consider the following 172-residue polypeptide: C-phycocyanin beta subunit (172 aa).

The residue at position 72 (asparagine 72) is an N4-methylasparagine. (2R,3E)-phycocyanobilin-binding residues include cysteine 82 and cysteine 153.

It belongs to the phycobiliprotein family. Heterodimer of an alpha and a beta chain, which further assembles into trimers. The trimers assemble into hexamers, although these were not seen in the crystallographic studies. Part of 2 PBS rod complexes, the conventional CpcG-PBS rod and a photosystem I-specific CpcL-PBS rod, both of which include ferredoxin--NADP reductase (petH). Interacts with rod linker CpcC2 via the latter's N-terminal PBS-linker domain. In terms of processing, contains two covalently linked bilin chromophores.

Its subcellular location is the cellular thylakoid membrane. In terms of biological role, light-harvesting photosynthetic bile pigment-protein from the phycobiliprotein complex (phycobilisome, PBS). Phycocyanin is the major phycobiliprotein in the PBS rod. This is C-phycocyanin beta subunit (cpcB) from Synechocystis sp. (strain ATCC 27184 / PCC 6803 / Kazusa).